The primary structure comprises 301 residues: Mitochondrial ornithine transporter 1 (301 aa).

Helical transmembrane passes span 5–25 (PAIQ…ACVL), 68–88 (SPAL…YGFC), 110–130 (AAAG…TELV), 168–188 (GFYH…FFFF), 207–227 (LGPV…WLAV), and 237–257 (IQVL…LSIV). Solcar repeat units lie at residues 7–91 (IQAA…CQQV), 104–197 (LSDL…SRSF), and 207–293 (LGPV…SRKL).

The protein belongs to the mitochondrial carrier (TC 2.A.29) family. Widely expressed, with highest levels in the liver, testis and kidney. In the brain, expressed at high levels in the hypothalamus.

Its subcellular location is the mitochondrion inner membrane. It is found in the mitochondrion membrane. It carries out the reaction L-citrulline(in) + L-ornithine(out) + H(+)(in) = L-citrulline(out) + L-ornithine(in) + H(+)(out). The catalysed reaction is L-ornithine(in) + L-arginine(out) = L-ornithine(out) + L-arginine(in). It catalyses the reaction L-ornithine(out) + L-lysine(in) = L-ornithine(in) + L-lysine(out). The enzyme catalyses L-lysine(out) + H(+)(in) = L-lysine(in) + H(+)(out). It carries out the reaction L-ornithine(out) + H(+)(in) = L-ornithine(in) + H(+)(out). With respect to regulation, inhibited by pyridoxal 5'-phosphate as well as by mercurials (mersalyl, p-chloromercuribenzene sulfonate, and mercuric chloride), N-ethylmaleimide and spermine. In terms of biological role, mitochondrial ornithine-citrulline antiporter. Catalyzes the exchange between cytosolic ornithine and mitochondrial citrulline plus an H(+), the proton compensates the positive charge of ornithine thus leading to an electroneutral transport. Plays a crucial role in the urea cycle, by connecting the cytosolic and the intramitochondrial reactions of the urea cycle. Lysine and arginine are also transported by the antiport mechanism. In addition, catalyzes an electroneutral exchange of ornithine or lysine for H(+), a reaction driven by the pH gradient across the inner membrane. The polypeptide is Mitochondrial ornithine transporter 1 (Mus musculus (Mouse)).